Reading from the N-terminus, the 549-residue chain is uncharacterized protein (549 aa).

This is an uncharacterized protein from Methanocaldococcus jannaschii (strain ATCC 43067 / DSM 2661 / JAL-1 / JCM 10045 / NBRC 100440) (Methanococcus jannaschii).